The following is a 133-amino-acid chain: Fluoride-specific ion channel FluC 3 (133 aa).

Helical transmembrane passes span 7-27 (ILVL…SGYV), 37-57 (WGTF…AGLG), and 60-80 (LGAI…LLGG). Na(+) is bound by residues glycine 79 and threonine 82. Residues 107 to 127 (IVASALLCVLAVAAGYGGIMW) form a helical membrane-spanning segment.

This sequence belongs to the fluoride channel Fluc/FEX (TC 1.A.43) family.

It is found in the cell inner membrane. The catalysed reaction is fluoride(in) = fluoride(out). Na(+) is not transported, but it plays an essential structural role and its presence is essential for fluoride channel function. Functionally, fluoride-specific ion channel. Important for reducing fluoride concentration in the cell, thus reducing its toxicity. In Brucella suis biovar 1 (strain 1330), this protein is Fluoride-specific ion channel FluC 3.